A 291-amino-acid chain; its full sequence is Cytochrome c-552 (291 aa).

The N-terminal stretch at Met1 to Ala23 is a signal peptide. 6 residues coordinate heme c: Cys68, Cys71, His72, Cys157, Cys161, and His162.

Post-translationally, binds 2 heme c groups per subunit.

It is found in the periplasm. In terms of biological role, may play a role in nitrite reduction. Shows peroxidase activity on proteolytic modification. This chain is Cytochrome c-552 (nirB), found in Stutzerimonas stutzeri (Pseudomonas stutzeri).